Here is a 407-residue protein sequence, read N- to C-terminus: 4-hydroxy-3-methylbut-2-en-1-yl diphosphate synthase (ferredoxin) (407 aa).

Residues Cys-316, Cys-319, Cys-350, and Glu-357 each contribute to the [4Fe-4S] cluster site.

It belongs to the IspG family. It depends on [4Fe-4S] cluster as a cofactor.

The enzyme catalyses (2E)-4-hydroxy-3-methylbut-2-enyl diphosphate + 2 oxidized [2Fe-2S]-[ferredoxin] + H2O = 2-C-methyl-D-erythritol 2,4-cyclic diphosphate + 2 reduced [2Fe-2S]-[ferredoxin] + H(+). It functions in the pathway isoprenoid biosynthesis; isopentenyl diphosphate biosynthesis via DXP pathway; isopentenyl diphosphate from 1-deoxy-D-xylulose 5-phosphate: step 5/6. Converts 2C-methyl-D-erythritol 2,4-cyclodiphosphate (ME-2,4cPP) into 1-hydroxy-2-methyl-2-(E)-butenyl 4-diphosphate. This is 4-hydroxy-3-methylbut-2-en-1-yl diphosphate synthase (ferredoxin) from Prochlorococcus marinus (strain SARG / CCMP1375 / SS120).